Here is a 274-residue protein sequence, read N- to C-terminus: Nitrogenase iron protein (274 aa).

An ATP-binding site is contributed by 8 to 15 (GKGGIGKS). Position 94 (cysteine 94) interacts with [4Fe-4S] cluster. Arginine 97 is modified (ADP-ribosylarginine; by dinitrogenase reductase ADP-ribosyltransferase). [4Fe-4S] cluster is bound at residue cysteine 129.

The protein belongs to the NifH/BchL/ChlL family. Homodimer. [4Fe-4S] cluster is required as a cofactor. Post-translationally, the reversible ADP-ribosylation of Arg-97 inactivates the nitrogenase reductase and regulates nitrogenase activity.

It carries out the reaction N2 + 8 reduced [2Fe-2S]-[ferredoxin] + 16 ATP + 16 H2O = H2 + 8 oxidized [2Fe-2S]-[ferredoxin] + 2 NH4(+) + 16 ADP + 16 phosphate + 6 H(+). Its function is as follows. The key enzymatic reactions in nitrogen fixation are catalyzed by the nitrogenase complex, which has 2 components: the iron protein and the molybdenum-iron protein. The chain is Nitrogenase iron protein from Methanocella arvoryzae (strain DSM 22066 / NBRC 105507 / MRE50).